We begin with the raw amino-acid sequence, 407 residues long: Chorismate synthase (407 aa).

2 residues coordinate NADP(+): arginine 40 and arginine 46. FMN-binding positions include 138–140 (RAS) and 259–260 (QA). Residues 275 to 284 (RRGSRAHDEM) are compositionally biased toward basic and acidic residues. Residues 275-308 (RRGSRAHDEMYPGTDGVVRSTNRAGGLEGGMTNG) form a disordered region. FMN is bound by residues glycine 303, 318–322 (KPIST), and arginine 344.

This sequence belongs to the chorismate synthase family. In terms of assembly, homotetramer. FMNH2 serves as cofactor.

The enzyme catalyses 5-O-(1-carboxyvinyl)-3-phosphoshikimate = chorismate + phosphate. It participates in metabolic intermediate biosynthesis; chorismate biosynthesis; chorismate from D-erythrose 4-phosphate and phosphoenolpyruvate: step 7/7. Its function is as follows. Catalyzes the anti-1,4-elimination of the C-3 phosphate and the C-6 proR hydrogen from 5-enolpyruvylshikimate-3-phosphate (EPSP) to yield chorismate, which is the branch point compound that serves as the starting substrate for the three terminal pathways of aromatic amino acid biosynthesis. This reaction introduces a second double bond into the aromatic ring system. The polypeptide is Chorismate synthase (Mycobacterium marinum (strain ATCC BAA-535 / M)).